The primary structure comprises 190 residues: Elongation factor P-like protein (190 aa).

The protein belongs to the elongation factor P family.

This Psychromonas ingrahamii (strain DSM 17664 / CCUG 51855 / 37) protein is Elongation factor P-like protein.